Here is a 612-residue protein sequence, read N- to C-terminus: MARQLFTPPITNPRFDPNQSIRESYKNTTGGMQFQQNLHEDQNDNERSSCDGDENSTTGERLENNKSPILTKQEIDEALNTVTNLPPELSKLIDIFIDDLKQPKYVRPLSVLQLSSLFQSFYIKFDKASFQHVSSANNNGYYFSGGGSSSFLAAKETLSSGLSGIFGRSRSSSGNSLMRPRRSSSLFSNESISNSTNATQMLSPEEIKKQLKINELNNMKIEKYMELCERDVFKKILIVGTSVSSPNKMKTFKPHQLQTFKVGNLFRNSVEFTEYNKLLNEKILCLSKLSTMNKINLIKFLSLNNGIDPEPKFEEIKDILYEFTYHSISPCEKIKALLKLHEIMTYSQEMSNDDYLSLLIYYIITIVPRDIFLNAEFIRLFRYKKKLVETESFALTNLEAALVFVEGLTKNDFSNELQDKLTVNESKILENSISSRVSLPSKTAIMHKNNGNNGSNLGDIVTPTIQRPDVTRSNSYDGFRTVFDSSLKNIIGKIRSYTPPHPNNTSNNNLHSSNNLNIPRSSSQLSMELSNRDTTEMSRDGSRSTSSSSRSSASLEHGNREFTGDLTVTASINGADKKEFQKSWKKYKGYKFEDLTICELRDLFEIYQKMMQ.

A compositionally biased stretch (basic and acidic residues) spans 40–50 (EDQNDNERSSC). Residues 40-66 (EDQNDNERSSCDGDENSTTGERLENNK) form a disordered region. Polar residues predominate over residues 55–66 (NSTTGERLENNK). S67, S163, S185, and S245 each carry phosphoserine. The 142-residue stretch at 273 to 414 (TEYNKLLNEK…VEGLTKNDFS (142 aa)) folds into the VPS9 domain. The segment at 494-560 (IRSYTPPHPN…SSASLEHGNR (67 aa)) is disordered. The segment covering 503–517 (NNTSNNNLHSSNNLN) has biased composition (low complexity). Positions 518–529 (IPRSSSQLSMEL) are enriched in polar residues. Residues 530 to 542 (SNRDTTEMSRDGS) show a composition bias toward basic and acidic residues. Positions 543–554 (RSTSSSSRSSAS) are enriched in low complexity.

Its subcellular location is the cytoplasm. Functionally, putative GTPase-activating protein. The polypeptide is Protein MUK1 (MUK1) (Saccharomyces cerevisiae (strain ATCC 204508 / S288c) (Baker's yeast)).